The primary structure comprises 921 residues: Isoleucine--tRNA ligase (921 aa).

The short motif at 59-69 is the 'HIGH' region element; sequence PYANGHLHIGH. Residue E569 participates in L-isoleucyl-5'-AMP binding. A 'KMSKS' region motif is present at residues 610–614; it reads KMSKS. Residue K613 participates in ATP binding. The Zn(2+) site is built by C894, C897, C909, and C912.

The protein belongs to the class-I aminoacyl-tRNA synthetase family. IleS type 1 subfamily. In terms of assembly, monomer. Zn(2+) is required as a cofactor.

It localises to the cytoplasm. The catalysed reaction is tRNA(Ile) + L-isoleucine + ATP = L-isoleucyl-tRNA(Ile) + AMP + diphosphate. In terms of biological role, catalyzes the attachment of isoleucine to tRNA(Ile). As IleRS can inadvertently accommodate and process structurally similar amino acids such as valine, to avoid such errors it has two additional distinct tRNA(Ile)-dependent editing activities. One activity is designated as 'pretransfer' editing and involves the hydrolysis of activated Val-AMP. The other activity is designated 'posttransfer' editing and involves deacylation of mischarged Val-tRNA(Ile). In Campylobacter lari (strain RM2100 / D67 / ATCC BAA-1060), this protein is Isoleucine--tRNA ligase.